Consider the following 163-residue polypeptide: Odorant-binding protein 1a (163 aa).

An N-terminal signal peptide occupies residues 1–16 (MAKFLLLALTFGLAHA). 2 disulfide bridges follow: C50–C54 and C69–C161.

It belongs to the calycin superfamily. Lipocalin family. May form a heterodimer with OBP1B. The N-terminus may be blocked. As to expression, expressed in nasal mucosa (at protein level). Specifically detected in septal and lateral nasal glands.

It is found in the secreted. Its function is as follows. Binds the chemical odorant 2-isobutyl-3-methoxypyrazine. This Mus musculus (Mouse) protein is Odorant-binding protein 1a.